We begin with the raw amino-acid sequence, 376 residues long: Enoyl-[acyl-carrier-protein] reductase, mitochondrial (376 aa).

The N-terminal 12 residues, 1-12, are a transit peptide targeting the mitochondrion; that stretch reads MLRTLRTSQLAR. The active-site Proton donor is tyrosine 79. Residues asparagine 160, 183–186, 206–208, 277–280, 302–304, and lysine 368 each bind NADP(+); these read NSGV, RDR, YGGM, and YWL.

This sequence belongs to the zinc-containing alcohol dehydrogenase family. Quinone oxidoreductase subfamily. In terms of assembly, homodimer.

It is found in the mitochondrion matrix. The enzyme catalyses a 2,3-saturated acyl-[ACP] + NADP(+) = a (2E)-enoyl-[ACP] + NADPH + H(+). In terms of biological role, catalyzes the NADPH-dependent reduction of trans-2-enoyl thioesters in mitochondrial fatty acid synthesis (fatty acid synthesis type II). Fatty acid chain elongation in mitochondria uses acyl carrier protein (ACP) as an acyl group carrier, but the enzyme accepts both ACP and CoA thioesters as substrates in vitro. Required for respiration and the maintenance of the mitochondrial compartment. The chain is Enoyl-[acyl-carrier-protein] reductase, mitochondrial (ETR1) from Yarrowia lipolytica (strain CLIB 122 / E 150) (Yeast).